We begin with the raw amino-acid sequence, 132 residues long: Large ribosomal subunit protein bL12 (132 aa).

Residues 100-126 show a composition bias toward basic and acidic residues; that stretch reads ESTPKPVKEGASKEDAEAAKKELEEAG. The tract at residues 100–132 is disordered; sequence ESTPKPVKEGASKEDAEAAKKELEEAGAKVSIK.

Belongs to the bacterial ribosomal protein bL12 family. In terms of assembly, homodimer. Part of the ribosomal stalk of the 50S ribosomal subunit. Forms a multimeric L10(L12)X complex, where L10 forms an elongated spine to which 2 to 4 L12 dimers bind in a sequential fashion. Binds GTP-bound translation factors.

Forms part of the ribosomal stalk which helps the ribosome interact with GTP-bound translation factors. Is thus essential for accurate translation. The protein is Large ribosomal subunit protein bL12 of Thermosynechococcus vestitus (strain NIES-2133 / IAM M-273 / BP-1).